Here is a 106-residue protein sequence, read N- to C-terminus: N(4)-acetylcytidine amidohydrolase (106 aa).

The ASCH domain maps to 9-105 (TFFEFLTPLI…ELYVIEYELI (97 aa)). K23 serves as the catalytic Proton acceptor. The active-site Nucleophile is T26. E76 functions as the Proton donor in the catalytic mechanism.

This sequence belongs to the N(4)-acetylcytidine amidohydrolase family.

It carries out the reaction N(4)-acetylcytidine + H2O = cytidine + acetate + H(+). The enzyme catalyses N(4)-acetyl-2'-deoxycytidine + H2O = 2'-deoxycytidine + acetate + H(+). The catalysed reaction is N(4)-acetylcytosine + H2O = cytosine + acetate + H(+). Its function is as follows. Catalyzes the hydrolysis of N(4)-acetylcytidine (ac4C). The sequence is that of N(4)-acetylcytidine amidohydrolase from Vibrio campbellii (strain ATCC BAA-1116).